A 117-amino-acid polypeptide reads, in one-letter code: UPF0127 protein PYRAB11210 (117 aa).

Belongs to the UPF0127 family.

This Pyrococcus abyssi (strain GE5 / Orsay) protein is UPF0127 protein PYRAB11210.